We begin with the raw amino-acid sequence, 708 residues long: Leukotoxin translocation ATP-binding protein LktB (708 aa).

Residues 1-126 (MEANHQRNDL…ACYQGQLILV (126 aa)) form the Peptidase C39 domain. The ABC transmembrane type-1 domain occupies 155-437 (FLETLIVSIF…LAQLWQDFQQ (283 aa)). Helical transmembrane passes span 159–179 (LIVSIFLQIFALITPLFFQVV), 192–212 (LNIITVALAIVIIFEIVLSGL), 270–290 (ALTSVLDLLFSFIFFAVMWYY), 296–316 (LVILGSLPFYILWSIFISPIL), and 389–409 (VMVINLWLGAHLVISGDLSIG). The ABC transporter domain occupies 469–704 (ISFKNIRFRY…SNGLYSYLHQ (236 aa)). 503–510 (GRSGSGKS) serves as a coordination point for ATP.

Belongs to the ABC transporter superfamily. Protein-1 exporter (TC 3.A.1.109) family. As to quaternary structure, homodimer.

The protein localises to the cell inner membrane. The enzyme catalyses ATP + H2O + proteinSide 1 = ADP + phosphate + proteinSide 2.. Its function is as follows. Part of the ABC transporter complex LktBD involved in leukotoxin export. Transmembrane domains (TMD) form a pore in the inner membrane and the ATP-binding domain (NBD) is responsible for energy generation. The protein is Leukotoxin translocation ATP-binding protein LktB (lktB) of Bibersteinia trehalosi (Pasteurella trehalosi).